The chain runs to 378 residues: Dual-specificity RNA methyltransferase RlmN 2 (378 aa).

Glutamate 113 serves as the catalytic Proton acceptor. In terms of domain architecture, Radical SAM core spans 119-355 (TEDRRTLCVS…AAYIRRNRGR (237 aa)). A disulfide bridge links cysteine 126 with cysteine 361. Residues cysteine 133, cysteine 137, and cysteine 140 each contribute to the [4Fe-4S] cluster site. S-adenosyl-L-methionine-binding positions include 188–189 (GE), serine 220, 242–244 (SLN), and asparagine 318. The active-site S-methylcysteine intermediate is the cysteine 361.

This sequence belongs to the radical SAM superfamily. RlmN family. It depends on [4Fe-4S] cluster as a cofactor.

Its subcellular location is the cytoplasm. The enzyme catalyses adenosine(2503) in 23S rRNA + 2 reduced [2Fe-2S]-[ferredoxin] + 2 S-adenosyl-L-methionine = 2-methyladenosine(2503) in 23S rRNA + 5'-deoxyadenosine + L-methionine + 2 oxidized [2Fe-2S]-[ferredoxin] + S-adenosyl-L-homocysteine. The catalysed reaction is adenosine(37) in tRNA + 2 reduced [2Fe-2S]-[ferredoxin] + 2 S-adenosyl-L-methionine = 2-methyladenosine(37) in tRNA + 5'-deoxyadenosine + L-methionine + 2 oxidized [2Fe-2S]-[ferredoxin] + S-adenosyl-L-homocysteine. Functionally, specifically methylates position 2 of adenine 2503 in 23S rRNA and position 2 of adenine 37 in tRNAs. m2A2503 modification seems to play a crucial role in the proofreading step occurring at the peptidyl transferase center and thus would serve to optimize ribosomal fidelity. This is Dual-specificity RNA methyltransferase RlmN 2 from Myxococcus xanthus (strain DK1622).